We begin with the raw amino-acid sequence, 513 residues long: Cytochrome P450 705A1 (513 aa).

Residues 9–29 traverse the membrane as a helical segment; the sequence is QNCFIIILLCSFSLISYFVFF. Heme is bound at residue Cys448.

It belongs to the cytochrome P450 family. The cofactor is heme. As to expression, expressed in root stele, root cortex, root epidermis, root pericycle of the root hair zone, and quiescent center at the root meristematic zone.

It is found in the membrane. In terms of biological role, cleaves the arabidiol side chain at C15 to form 14-apo-arabidiol and a side-chain fragment. Involved in the biosynthesis of the volatile homoterpene (E)-4,8-dimethyl-1,3,7-nonatriene (DMNT) in roots. Involved in the production of DMNT by degrading the triterpene arabidiol. May be involved in the defense again the fungal root pathogen Pythium irregulare by producing DMNT. This is Cytochrome P450 705A1 from Arabidopsis thaliana (Mouse-ear cress).